A 955-amino-acid chain; its full sequence is MPGGAGAARLCLLAFALQPLRPRAAREPGWTRGSEEGSPKLQHELIIPQWKTSESPVREKHPLKAELRVMAEGRELILDLEKNEQLFAPSYTETHYTSSGNPQTTTRKLEDHCFYHGTVRETELSSVTLSTCRGIRGLITVSSNLSYVIEPLPDSKGQHLIYRSEHLKPPPGNCGFEHSKPTTRDWALQFTQQTKKRPRRMKREDLNSMKYVELYLVADYLEFQKNRRDQDATKHKLIEIANYVDKFYRSLNIRIALVGLEVWTHGNMCEVSENPYSTLWSFLSWRRKLLAQKYHDNAQLITGMSFHGTTIGLAPLMAMCSVYQSGGVNMDHSENAIGVAATMAHEMGHNFGMTHDSADCCSASAADGGCIMAAATGHPFPKVFNGCNRRELDRYLQSGGGMCLSNMPDTRMLYGGRRCGNGYLEDGEECDCGEEEECNNPCCNASNCTLRPGAECAHGSCCHQCKLLAPGTLCREQARQCDLPEFCTGKSPHCPTNFYQMDGTPCEGGQAYCYNGMCLTYQEQCQQLWGPGARPAPDLCFEKVNVAGDTFGNCGKDMNGEHRKCNMRDAKCGKIQCQSSEARPLESNAVPIDTTIIMNGRQIQCRGTHVYRGPEEEGDMLDPGLVMTGTKCGYNHICFEGQCRNTSFFETEGCGKKCNGHGVCNNNQNCHCLPGWAPPFCNTPGHGGSIDSGPMPPESVGPVVAGVLVAILVLAVLMLMYYCCRQNNKLGQLKPSALPSKLRQQFSCPFRVSQNSGTGHANPTFKLQTPQGKRKVINTPEILRKPSQPPPRPPPDYLRGGSPPAPLPAHLSRAARNSPGPGSQIERTESSRRPPPSRPIPPAPNCIVSQDFSRPRPPQKALPANPVPGRRSLPRPGGASPLRPPGAGPQQSRPLAALAPKVSPREALKVKAGTRGLQGGRCRVEKTKQFMLLVVWTELPEQKPRAKHSCFLVPA.

The N-terminal stretch at Met1–Ala25 is a signal peptide. Positions Arg26–Lys202 are excised as a propeptide. Residues Ser130–Gly137 carry the Cysteine switch motif. Cys132 is a binding site for Zn(2+). Residue Asn144 is glycosylated (N-linked (GlcNAc...) asparagine). Residues Arg203–Ser699 lie on the Extracellular side of the membrane. Residues Lys210–Pro408 enclose the Peptidase M12B domain. Intrachain disulfides connect Cys320–Cys403, Cys360–Cys387, and Cys361–Cys370. His345 contributes to the Zn(2+) binding site. Residue Glu346 is part of the active site. Zn(2+) is bound by residues His349 and His355. The Disintegrin domain occupies Gly416–Asp502. N-linked (GlcNAc...) asparagine glycosylation is found at Asn444 and Asn447. Cysteines 474 and 494 form a disulfide. Residue Asn645 is glycosylated (N-linked (GlcNAc...) asparagine). The EGF-like domain maps to Glu650 to Asn682. 3 disulfides stabilise this stretch: Cys654/Cys664, Cys658/Cys670, and Cys672/Cys681. A helical membrane pass occupies residues Val700–Met720. Topologically, residues Tyr721 to Ala955 are cytoplasmic. A compositionally biased stretch (polar residues) spans Ser753–Gln771. A disordered region spans residues Ser753–Leu917. Pro residues-rich tracts occupy residues Ser787–Asp796 and Arg833–Pro844. Positions Arg833–Pro844 match the SH3-binding motif.

Interacts with SH3PXD2A. It depends on Zn(2+) as a cofactor. Post-translationally, the precursor is cleaved by a furin endopeptidase. In terms of tissue distribution, expressed in many normal organ tissues and several cancer cell lines.

The protein localises to the membrane. Participates in the proteolytic processing of beta-type neuregulin isoforms which are involved in neurogenesis and synaptogenesis, suggesting a regulatory role in glial cell. Also cleaves alpha-2 macroglobulin. May be involved in osteoblast differentiation and/or osteoblast activity in bone. In Homo sapiens (Human), this protein is Disintegrin and metalloproteinase domain-containing protein 19 (ADAM19).